A 361-amino-acid chain; its full sequence is Phospho-N-acetylmuramoyl-pentapeptide-transferase (361 aa).

Helical transmembrane passes span 25 to 45, 73 to 93, 98 to 118, 139 to 159, 168 to 188, 200 to 220, 237 to 257, 264 to 284, 289 to 309, and 339 to 359; these read RGILAALTALFLSLWMGPAVI, TMGGSLILLTVTLSVLLWGDL, VWLVLAVMICFGAIGWYDDWI, IFGLAAGLFLYYTADVPAAIT, IALPLAGVSFVVIAYFWIVGF, GLAIMPTVLVACALGVFAYAS, AGELIIICSAIAGAGLGFLWF, VFMGDIGALSLGAVLGTIAVI, MVLVIMGGVFVIETLSVMIQV, and VIVRFWIISVVLVLIGLATLK.

This sequence belongs to the glycosyltransferase 4 family. MraY subfamily. The cofactor is Mg(2+).

The protein localises to the cell inner membrane. The catalysed reaction is UDP-N-acetyl-alpha-D-muramoyl-L-alanyl-gamma-D-glutamyl-meso-2,6-diaminopimeloyl-D-alanyl-D-alanine + di-trans,octa-cis-undecaprenyl phosphate = di-trans,octa-cis-undecaprenyl diphospho-N-acetyl-alpha-D-muramoyl-L-alanyl-D-glutamyl-meso-2,6-diaminopimeloyl-D-alanyl-D-alanine + UMP. It functions in the pathway cell wall biogenesis; peptidoglycan biosynthesis. Its function is as follows. Catalyzes the initial step of the lipid cycle reactions in the biosynthesis of the cell wall peptidoglycan: transfers peptidoglycan precursor phospho-MurNAc-pentapeptide from UDP-MurNAc-pentapeptide onto the lipid carrier undecaprenyl phosphate, yielding undecaprenyl-pyrophosphoryl-MurNAc-pentapeptide, known as lipid I. In Xanthomonas axonopodis pv. citri (strain 306), this protein is Phospho-N-acetylmuramoyl-pentapeptide-transferase.